The following is a 750-amino-acid chain: Catalase-peroxidase (750 aa).

The tryptophyl-tyrosyl-methioninium (Trp-Tyr) (with M-261) cross-link spans 112–235 (WHSAGTYRIG…LGAAHMGLIY (124 aa)). The active-site Proton acceptor is the H113. The segment at residues 235–261 (YVNPEGHNGNPDPVEAASYIRETFGRM) is a cross-link (tryptophyl-tyrosyl-methioninium (Tyr-Met) (with W-112)). Position 276 (H276) interacts with heme b.

This sequence belongs to the peroxidase family. Peroxidase/catalase subfamily. As to quaternary structure, homodimer or homotetramer. It depends on heme b as a cofactor. In terms of processing, formation of the three residue Trp-Tyr-Met cross-link is important for the catalase, but not the peroxidase activity of the enzyme.

It catalyses the reaction H2O2 + AH2 = A + 2 H2O. It carries out the reaction 2 H2O2 = O2 + 2 H2O. Its function is as follows. Bifunctional enzyme with both catalase and broad-spectrum peroxidase activity. This Christiangramia forsetii (strain DSM 17595 / CGMCC 1.15422 / KT0803) (Gramella forsetii) protein is Catalase-peroxidase.